A 181-amino-acid polypeptide reads, in one-letter code: Inner membrane-spanning protein YciB (181 aa).

The next 5 helical transmembrane spans lie at 10-30, 50-70, 72-92, 118-138, and 148-168; these read LVIF…GALI, MHLI…VFHD, AFIK…LGIS, ITWY…YVAF, and FKVF…VFYL.

The protein belongs to the YciB family.

Its subcellular location is the cell inner membrane. In terms of biological role, plays a role in cell envelope biogenesis, maintenance of cell envelope integrity and membrane homeostasis. The polypeptide is Inner membrane-spanning protein YciB (Shewanella putrefaciens (strain CN-32 / ATCC BAA-453)).